A 453-amino-acid polypeptide reads, in one-letter code: UDP-N-acetylmuramoylalanine--D-glutamate ligase (453 aa).

115-121 (GSNGKTT) contributes to the ATP binding site.

The protein belongs to the MurCDEF family.

The protein resides in the cytoplasm. The enzyme catalyses UDP-N-acetyl-alpha-D-muramoyl-L-alanine + D-glutamate + ATP = UDP-N-acetyl-alpha-D-muramoyl-L-alanyl-D-glutamate + ADP + phosphate + H(+). Its pathway is cell wall biogenesis; peptidoglycan biosynthesis. In terms of biological role, cell wall formation. Catalyzes the addition of glutamate to the nucleotide precursor UDP-N-acetylmuramoyl-L-alanine (UMA). This is UDP-N-acetylmuramoylalanine--D-glutamate ligase from Koribacter versatilis (strain Ellin345).